The chain runs to 469 residues: 3-isopropylmalate dehydratase large subunit (469 aa).

[4Fe-4S] cluster-binding residues include Cys-350, Cys-410, and Cys-413.

Belongs to the aconitase/IPM isomerase family. LeuC type 1 subfamily. In terms of assembly, heterodimer of LeuC and LeuD. Requires [4Fe-4S] cluster as cofactor.

It carries out the reaction (2R,3S)-3-isopropylmalate = (2S)-2-isopropylmalate. It functions in the pathway amino-acid biosynthesis; L-leucine biosynthesis; L-leucine from 3-methyl-2-oxobutanoate: step 2/4. In terms of biological role, catalyzes the isomerization between 2-isopropylmalate and 3-isopropylmalate, via the formation of 2-isopropylmaleate. The sequence is that of 3-isopropylmalate dehydratase large subunit from Sinorhizobium medicae (strain WSM419) (Ensifer medicae).